A 253-amino-acid chain; its full sequence is Triosephosphate isomerase (253 aa).

Residue N9–K11 participates in substrate binding. H95 serves as the catalytic Electrophile. E167 serves as the catalytic Proton acceptor. Residues G173, S213, and G234–G235 contribute to the substrate site. S213 is modified (phosphoserine).

It belongs to the triosephosphate isomerase family. Homodimer.

The protein resides in the cytoplasm. The catalysed reaction is D-glyceraldehyde 3-phosphate = dihydroxyacetone phosphate. The protein operates within carbohydrate biosynthesis; gluconeogenesis. It functions in the pathway carbohydrate degradation; glycolysis; D-glyceraldehyde 3-phosphate from glycerone phosphate: step 1/1. Its function is as follows. Involved in the gluconeogenesis. Catalyzes stereospecifically the conversion of dihydroxyacetone phosphate (DHAP) to D-glyceraldehyde-3-phosphate (G3P). The protein is Triosephosphate isomerase of Bacillus subtilis (strain 168).